Here is a 269-residue protein sequence, read N- to C-terminus: Intercellular adhesion molecule 4 (269 aa).

The first 20 residues, 1–20 (SLFPLSLLFFLAAAYPGVGS), serve as a signal peptide directing secretion. At 21 to 238 (ALGRRTKRAQ…MLAWSSAPTA (218 aa)) the chain is on the extracellular side. Ig-like C2-type domains are found at residues 60–122 (GKSV…TRWA) and 144–215 (GRKY…LNLD). N-linked (GlcNAc...) asparagine glycans are attached at residues Asn66, Asn76, Asn188, and Asn221. Cystine bridges form between Cys67-Cys111, Cys67-Cys115, Cys71-Cys115, and Cys151-Cys208. A helical membrane pass occupies residues 239 to 259 (LASVSIAALVGILLTVGAAYL). At 260–269 (CKCLAMKSQA) the chain is on the cytoplasmic side.

Belongs to the immunoglobulin superfamily. ICAM family. Post-translationally, N- and O-glycosylated.

It localises to the cell membrane. Its function is as follows. ICAM proteins are ligands for the leukocyte adhesion protein LFA-1 (integrin alpha-L/beta-2). ICAM4 is also a ligand for alpha-4/beta-1 and alpha-V integrins. In Pan troglodytes (Chimpanzee), this protein is Intercellular adhesion molecule 4 (ICAM4).